The primary structure comprises 400 residues: Argininosuccinate synthase (400 aa).

Residue 8-16 (AYSGGLDTS) participates in ATP binding. Position 87 (Y87) interacts with L-citrulline. An ATP-binding site is contributed by G117. T119, N123, and D124 together coordinate L-aspartate. An L-citrulline-binding site is contributed by N123. Positions 127, 175, 260, and 272 each coordinate L-citrulline.

The protein belongs to the argininosuccinate synthase family. Type 1 subfamily. Homotetramer.

It is found in the cytoplasm. The enzyme catalyses L-citrulline + L-aspartate + ATP = 2-(N(omega)-L-arginino)succinate + AMP + diphosphate + H(+). Its pathway is amino-acid biosynthesis; L-arginine biosynthesis; L-arginine from L-ornithine and carbamoyl phosphate: step 2/3. In Nocardia farcinica (strain IFM 10152), this protein is Argininosuccinate synthase.